A 178-amino-acid chain; its full sequence is MAAGTAAALAFLSQESRTRAGGVGGLRVPAPVTMDSFFFGCELSGHTRSFTFKVEEEDDAEHVLALTMLCLTEGAKDECNVVEVVARNHDHQEIAVPVANLKLSCQPMLSLDDFQLQPPVTFRLKSGSGPVRITGRHQIVTMSNDVSEEESEEEEEDSDEEEVELCPILPAKKQGGRP.

A2 bears the N-acetylalanine mark. Residues S13 and S16 each carry the phosphoserine modification. Omega-N-methylarginine is present on R27. The interval 141–178 is disordered; it reads TMSNDVSEEESEEEEEDSDEEEVELCPILPAKKQGGRP. Over residues 146-164 the composition is skewed to acidic residues; it reads VSEEESEEEEEDSDEEEVE. Residues S147, S151, and S158 each carry the phosphoserine modification.

This sequence belongs to the nucleoplasmin family. As to quaternary structure, interacts with NPM (via N-terminus). Forms a pentamer with NPM at a ratio 4:1 (NPM3/NPM). Two pentamers form a decamer. In terms of processing, phosphorylated. As to expression, ubiquitous.

Its subcellular location is the nucleus. It localises to the nucleolus. Plays a role in the regulation of diverse cellular processes such as ribosome biogenesis, chromatin remodeling or protein chaperoning. Modulates the histone chaperone function and the RNA-binding activity of nucleolar phosphoprotein B23/NPM. Efficiently mediates chromatin remodeling when included in a pentamer containing NPM3 and NPM. The polypeptide is Nucleoplasmin-3 (NPM3) (Homo sapiens (Human)).